Here is a 286-residue protein sequence, read N- to C-terminus: Glycine--tRNA ligase alpha subunit (286 aa).

Belongs to the class-II aminoacyl-tRNA synthetase family. In terms of assembly, tetramer of two alpha and two beta subunits.

It localises to the cytoplasm. It carries out the reaction tRNA(Gly) + glycine + ATP = glycyl-tRNA(Gly) + AMP + diphosphate. The protein is Glycine--tRNA ligase alpha subunit of Campylobacter lari (strain RM2100 / D67 / ATCC BAA-1060).